Here is a 442-residue protein sequence, read N- to C-terminus: UDP-glycosyltransferase 79B7 (442 aa).

UDP-alpha-D-glucose contacts are provided by residues Ser-260, 319 to 321 (VQQ), 336 to 344 (HCGPGTIWE), and 358 to 361 (LSDQ).

This sequence belongs to the UDP-glycosyltransferase family.

The chain is UDP-glycosyltransferase 79B7 (UGT79B7) from Arabidopsis thaliana (Mouse-ear cress).